The primary structure comprises 103 residues: Small ribosomal subunit protein uS10 (103 aa).

It belongs to the universal ribosomal protein uS10 family. In terms of assembly, part of the 30S ribosomal subunit.

Functionally, involved in the binding of tRNA to the ribosomes. The chain is Small ribosomal subunit protein uS10 from Alkalilimnicola ehrlichii (strain ATCC BAA-1101 / DSM 17681 / MLHE-1).